The following is a 460-amino-acid chain: NADH-ubiquinone oxidoreductase chain 4 (460 aa).

Transmembrane regions (helical) follow at residues 22 to 42 (WLWPTTLLHSLLIALASLSWL), 61 to 81 (PLSTPLLILSCWLLPLMILAS), 97 to 114 (YISLLTSLQFFLILAFSA), 118 to 140 (IMFYVMFEVTLIPTLILITRWGN), 149 to 169 (TYFLFYTLAGSLPLLVALLLL), 196 to 216 (IWWTGCILAFLVKMPLYGVHL), 226 to 246 (PIAGSMILAAVLLKLGGYGMM), 259 to 279 (LSYPFIILALWGVIMTGSICM), 286 to 305 (SLIAYSSVSHMGLVVGGILI), 309 to 331 (WGFTGALILMIAHGLTSSALFCL), 352 to 372 (MALPLMTAWWFIASLANLALP), 395 to 415 (IALTGLGMLITAGYSLYMFLM), and 437 to 457 (LLIALHLLPLLLLILKPELIW).

The protein belongs to the complex I subunit 4 family.

The protein localises to the mitochondrion membrane. The catalysed reaction is a ubiquinone + NADH + 5 H(+)(in) = a ubiquinol + NAD(+) + 4 H(+)(out). In terms of biological role, core subunit of the mitochondrial membrane respiratory chain NADH dehydrogenase (Complex I) that is believed to belong to the minimal assembly required for catalysis. Complex I functions in the transfer of electrons from NADH to the respiratory chain. The immediate electron acceptor for the enzyme is believed to be ubiquinone. This chain is NADH-ubiquinone oxidoreductase chain 4 (MT-ND4), found in Tetraodon nigroviridis (Spotted green pufferfish).